Here is a 693-residue protein sequence, read N- to C-terminus: Ion-translocating oxidoreductase complex subunit C (693 aa).

2 4Fe-4S ferredoxin-type domains span residues 368–397 (MEPV…QQLY) and 407–436 (KARD…VQYY). 8 residues coordinate [4Fe-4S] cluster: C377, C380, C383, C387, C416, C419, C422, and C426. Over residues 539-548 (REERVREKQS) the composition is skewed to basic and acidic residues. Positions 539-564 (REERVREKQSQQETPATEVTPEELDP) are disordered.

Belongs to the 4Fe4S bacterial-type ferredoxin family. RnfC subfamily. As to quaternary structure, the complex is composed of six subunits: RnfA, RnfB, RnfC, RnfD, RnfE and RnfG. Requires [4Fe-4S] cluster as cofactor.

The protein resides in the cell inner membrane. In terms of biological role, part of a membrane-bound complex that couples electron transfer with translocation of ions across the membrane. In Pectobacterium atrosepticum (strain SCRI 1043 / ATCC BAA-672) (Erwinia carotovora subsp. atroseptica), this protein is Ion-translocating oxidoreductase complex subunit C.